The sequence spans 160 residues: Large ribosomal subunit protein uL22c (160 aa).

This sequence belongs to the universal ribosomal protein uL22 family. As to quaternary structure, part of the 50S ribosomal subunit.

It localises to the plastid. The protein localises to the chloroplast. In terms of biological role, this protein binds specifically to 23S rRNA. Its function is as follows. The globular domain of the protein is located near the polypeptide exit tunnel on the outside of the subunit, while an extended beta-hairpin is found that lines the wall of the exit tunnel in the center of the 70S ribosome. This Olimarabidopsis pumila (Dwarf rocket) protein is Large ribosomal subunit protein uL22c (rpl22).